Consider the following 423-residue polypeptide: MLRVRCLRGGSRGAEAVHYIGSRLGGSLTGWVQRTFQSTQAATASSRNSCAAEDKATHPLPKDCPVSSYNEWDPLEEVIVGRAENACVPPFTVEVKANTYEKYWPFYQKNGGLYFPKDHLKKAVAEVEEMCNILSMEGVTVRRPDPIDWSLKYKTPDFESTGLYSAMPRDILMVVGNEIIEAPMAWRSRFFEYRAYRSIIKDYFHRGAKWTTAPKPTMADELYDQNYPIHSVEDRHKLAAQGKFVTTEFEPCFDAADFIRAGRDIFAQRSQVTNYLGIEWMRRHLAPDYRVHIISFKDPNPMHIDATFNIIGPGLVLSNPDRPCHQIDLFKKAGWTIVTPPTPVIPDDHPLWMSSKWLSMNVLMLDEKRVMVDANEVPIQKMFEKLGISTIKVNIRNANSLGGGFHCWTCDVRRRGTLQSYFD.

The transit peptide at 1 to 43 directs the protein to the mitochondrion; it reads MLRVRCLRGGSRGAEAVHYIGSRLGGSLTGWVQRTFQSTQAAT. Residues Ser46 and Ser49 each carry the phosphoserine modification. Residue Asp170 coordinates arginine. Catalysis depends on residues Asp254 and His303. Residues Asp305, Arg322, Ser354, and Ser355 each contribute to the arginine site. The residue at position 385 (Lys385) is an N6-acetyllysine. Cys407 acts as the Amidino-cysteine intermediate in catalysis.

This sequence belongs to the amidinotransferase family. Homodimer. As to expression, expressed in kidney, brain, gonads, uterus, and embryonic head, chest and abdomen. Maternally expressed in the placenta and yolk sac of embryos.

Its subcellular location is the mitochondrion inner membrane. It catalyses the reaction L-arginine + glycine = guanidinoacetate + L-ornithine. The catalysed reaction is 4-aminobutanoate + L-arginine = 4-guanidinobutanoate + L-ornithine. The enzyme catalyses beta-alanine + L-arginine = 3-guanidinopropanoate + L-ornithine. It carries out the reaction taurine + L-arginine = taurocyamine + L-ornithine. It functions in the pathway amine and polyamine biosynthesis; creatine biosynthesis; creatine from L-arginine and glycine: step 1/2. Functionally, transamidinase that catalyzes the transfer of the amidino group of L-arginine onto the amino moiety of acceptor metabolites such as glycine, beta-alanine, gamma-aminobutyric acid (GABA) and taurine yielding the corresponding guanidine derivatives. Catalyzes the rate-limiting step of creatine biosynthesis, namely the transfer of the amidino group from L-arginine to glycine to generate guanidinoacetate, which is then methylated by GAMT to form creatine. Provides creatine as a source for ATP generation in tissues with high energy demands, in particular skeletal muscle, heart and brain. The protein is Glycine amidinotransferase, mitochondrial (Gatm) of Mus musculus (Mouse).